Consider the following 108-residue polypeptide: Translation initiation factor 1A (108 aa).

Positions 11–85 constitute an S1-like domain; the sequence is SVKEVPKPAE…NKCDIIYKYS (75 aa).

The protein belongs to the eIF-1A family.

In terms of biological role, seems to be required for maximal rate of protein biosynthesis. Enhances ribosome dissociation into subunits and stabilizes the binding of the initiator Met-tRNA(I) to 40 S ribosomal subunits. This is Translation initiation factor 1A (eIF1A) from Sulfurisphaera tokodaii (strain DSM 16993 / JCM 10545 / NBRC 100140 / 7) (Sulfolobus tokodaii).